The sequence spans 325 residues: Melanocortin receptor 5 (325 aa).

Residues 1–37 are Extracellular-facing; it reads MNSSFHLHFLDLGLNATEGNLSGLSVRNASSPCEDMG. N-linked (GlcNAc...) asparagine glycosylation is found at Asn-2, Asn-15, Asn-20, and Asn-28. A helical transmembrane segment spans residues 38–61; it reads IAVEVFLALGLISLLENILVIGAI. The Cytoplasmic portion of the chain corresponds to 62 to 73; it reads VRNRNLHIPMYF. Residues 74–97 form a helical membrane-spanning segment; it reads FVGSLAVADMLVSLSNFWETITIY. The Extracellular segment spans residues 98–114; the sequence is LLTNKHLVMADASVRHL. Residues 115-138 traverse the membrane as a helical segment; that stretch reads DNVFDSMICISVVASMCSLLAIAV. The Cytoplasmic portion of the chain corresponds to 139-155; that stretch reads DRYVTIFCRLRYQRIMT. A helical transmembrane segment spans residues 156–179; that stretch reads GRRSGAIIAGIWAFCTSCGTVFIV. Topologically, residues 180–186 are extracellular; it reads YYESTYV. A helical membrane pass occupies residues 187-211; the sequence is VVCLIAMFLTMLLLMASLYTHMFLL. At 212 to 239 the chain is on the cytoplasmic side; sequence ARTHVRRIAALPGHSSVRQRTGVKGAIT. A helical membrane pass occupies residues 240 to 265; the sequence is LAMLLGVFIICWAPFFLHLILMISCP. The Extracellular segment spans residues 266–273; that stretch reads QNLYCSCF. Residues 274–297 traverse the membrane as a helical segment; it reads MSHFNMYLILIMCNSVIDPLIYAF. Residues 298 to 325 are Cytoplasmic-facing; it reads RSQEMRKTFKEIVCFQGFRTPCRFPSTY. Cys-311 carries the S-palmitoyl cysteine lipid modification.

The protein belongs to the G-protein coupled receptor 1 family.

The protein resides in the cell membrane. In terms of biological role, receptor for MSH (alpha, beta and gamma) and ACTH. The activity of this receptor is mediated by G proteins which activate adenylate cyclase. This receptor is a possible mediator of the immunomodulation properties of melanocortins. The protein is Melanocortin receptor 5 (MC5R) of Ovis aries (Sheep).